The following is a 365-amino-acid chain: Mitogen-activated protein kinase 13 (365 aa).

A Protein kinase domain is found at 25-308; that stretch reads YVSPTHVGSG…AAQALTHPFF (284 aa). 31-39 contacts ATP; sequence VGSGAYGSV. Ser-47 is subject to Phosphoserine. Lys-54 is an ATP binding site. Asp-150 functions as the Proton acceptor in the catalytic mechanism. Position 180 is a phosphothreonine; by MAP2K3, MAP2K4, MAP2K6 and MAP2K7 (Thr-180). The TXY motif lies at 180-182; the sequence is TGY. Tyr-182 is modified (phosphotyrosine; by MAP2K3, MAP2K4, MAP2K6 and MAP2K7). Position 350 is a phosphoserine (Ser-350).

Belongs to the protein kinase superfamily. CMGC Ser/Thr protein kinase family. MAP kinase subfamily. In terms of assembly, interacts with MAPK8IP2. The cofactor is Mg(2+). In terms of processing, dually phosphorylated on Thr-180 and Tyr-182 by MAP2K3/MKK3, MAP2K4/MKK4, MAP2K6/MKK6 and MAP2K7/MKK7, which activates the enzyme. Dephosphorylated by dual specificity phosphatase DUSP1. In terms of tissue distribution, expressed in testes, pancreas, small intestine, lung and kidney. Abundant in macrophages, also present in neutrophils, CD4+ T-cells, and endothelial cells.

It catalyses the reaction L-seryl-[protein] + ATP = O-phospho-L-seryl-[protein] + ADP + H(+). The catalysed reaction is L-threonyl-[protein] + ATP = O-phospho-L-threonyl-[protein] + ADP + H(+). With respect to regulation, activated by phosphorylation on threonine and tyrosine by dual specificity kinases, MAP2K3/MKK3, MAP2K6/MKK6, MAP2K4/MKK4 and MAP2K7/MKK7. Activation by ultraviolet radiation, hyperosmotic shock, anisomycin or by TNF-alpha is mediated by MAP2K3/MKK3. Inhibited by dual specificity phosphatase DUSP1. Serine/threonine kinase which acts as an essential component of the MAP kinase signal transduction pathway. MAPK13 is one of the four p38 MAPKs which play an important role in the cascades of cellular responses evoked by extracellular stimuli such as pro-inflammatory cytokines or physical stress leading to direct activation of transcription factors such as ELK1 and ATF2. Accordingly, p38 MAPKs phosphorylate a broad range of proteins and it has been estimated that they may have approximately 200 to 300 substrates each. MAPK13 is one of the less studied p38 MAPK isoforms. Some of the targets are downstream kinases such as MAPKAPK2, which are activated through phosphorylation and further phosphorylate additional targets. Plays a role in the regulation of protein translation by phosphorylating and inactivating EEF2K. Involved in cytoskeletal remodeling through phosphorylation of MAPT and STMN1. Mediates UV irradiation induced up-regulation of the gene expression of CXCL14. Plays an important role in the regulation of epidermal keratinocyte differentiation, apoptosis and skin tumor development. Phosphorylates the transcriptional activator MYB in response to stress which leads to rapid MYB degradation via a proteasome-dependent pathway. MAPK13 also phosphorylates and down-regulates PRKD1 during regulation of insulin secretion in pancreatic beta cells. This chain is Mitogen-activated protein kinase 13 (MAPK13), found in Homo sapiens (Human).